The sequence spans 499 residues: Glutamyl-tRNA(Gln) amidotransferase subunit A (499 aa).

Catalysis depends on charge relay system residues Lys80 and Ser155. Ser179 acts as the Acyl-ester intermediate in catalysis.

Belongs to the amidase family. GatA subfamily. In terms of assembly, heterotrimer of A, B and C subunits.

The catalysed reaction is L-glutamyl-tRNA(Gln) + L-glutamine + ATP + H2O = L-glutaminyl-tRNA(Gln) + L-glutamate + ADP + phosphate + H(+). Allows the formation of correctly charged Gln-tRNA(Gln) through the transamidation of misacylated Glu-tRNA(Gln) in organisms which lack glutaminyl-tRNA synthetase. The reaction takes place in the presence of glutamine and ATP through an activated gamma-phospho-Glu-tRNA(Gln). The protein is Glutamyl-tRNA(Gln) amidotransferase subunit A of Cupriavidus metallidurans (strain ATCC 43123 / DSM 2839 / NBRC 102507 / CH34) (Ralstonia metallidurans).